A 207-amino-acid polypeptide reads, in one-letter code: dITP/XTP pyrophosphatase (207 aa).

7 to 12 serves as a coordination point for substrate; that stretch reads SNNAKK. Asp72 functions as the Proton acceptor in the catalytic mechanism. Asp72 is a Mg(2+) binding site. Residues Ser73, 155–158, Lys183, and 188–189 each bind substrate; these read FGYD and HR.

Belongs to the HAM1 NTPase family. In terms of assembly, homodimer. The cofactor is Mg(2+).

It catalyses the reaction XTP + H2O = XMP + diphosphate + H(+). The catalysed reaction is dITP + H2O = dIMP + diphosphate + H(+). It carries out the reaction ITP + H2O = IMP + diphosphate + H(+). Its function is as follows. Pyrophosphatase that catalyzes the hydrolysis of nucleoside triphosphates to their monophosphate derivatives, with a high preference for the non-canonical purine nucleotides XTP (xanthosine triphosphate), dITP (deoxyinosine triphosphate) and ITP. Seems to function as a house-cleaning enzyme that removes non-canonical purine nucleotides from the nucleotide pool, thus preventing their incorporation into DNA/RNA and avoiding chromosomal lesions. The protein is dITP/XTP pyrophosphatase of Corynebacterium diphtheriae (strain ATCC 700971 / NCTC 13129 / Biotype gravis).